Here is a 194-residue protein sequence, read N- to C-terminus: MMMMKWIISILTMSIMPVLAYSSSIFRFHSEDVELCYGHLYFDRIYNVVNIKYNPHIPYRYNFINRTLTVDELDDNVFFTHGYFLKHKYGSLNPSLIVSLSGNLKYNDIQCSVNVSCLIKNLATSTSTILTSKHKTYSLHRSTCITIIGYDSIIWYKDINDKYNDIYDFTAICMLIASTLIVTIYVFKKIKMNS.

Residues 1 to 22 form the signal peptide; it reads MMMMKWIISILTMSIMPVLAYS. Residues 23–165 are Extracellular-facing; it reads SSIFRFHSED…YKDINDKYND (143 aa). N65 and N114 each carry an N-linked (GlcNAc...) asparagine; by host glycan. The chain crosses the membrane as a helical span at residues 166-186; the sequence is IYDFTAICMLIASTLIVTIYV. The Cytoplasmic portion of the chain corresponds to 187-194; it reads FKKIKMNS.

The protein belongs to the orthopoxvirus OPG172 protein family.

Its subcellular location is the host membrane. It is found in the host cell surface. The protein is Protein A43 (OPG172) of Homo sapiens (Human).